A 222-amino-acid chain; its full sequence is MSTPRQILAAIFDMDGLLIDSEPLWDRAELDVMASLGVDISRRNELPDTLGLRIDMVVDLWYARQPWNGPSRQEVVERVIARAISLVEETRPLLPGVREAVALCKEQGLLVGLASASPLHMLEKVLTMFDLRDSFDALASAEKLPYSKPHPQVYLDCAAKLGVDPLTCVALEDSVNGMIASKAARMRSIVVPAPEAQNDPRFVLADVKLSSLTELTAKDLLG.

Catalysis depends on D13, which acts as the Nucleophile. Residues D13 and D15 each contribute to the a divalent metal cation site. Residues 13–15 (DMD), 115–116 (SA), and K148 contribute to the substrate site. D15 (proton donor) is an active-site residue. D173 lines the a divalent metal cation pocket.

It belongs to the HAD-like hydrolase superfamily. CbbY/CbbZ/Gph/YieH family. The cofactor is Mg(2+). Mn(2+) serves as cofactor. It depends on Co(2+) as a cofactor. Requires Zn(2+) as cofactor.

It carries out the reaction sugar phosphate + H2O = sugar + phosphate.. The catalysed reaction is 2-deoxy-D-glucose 6-phosphate + H2O = 2-deoxy-D-glucose + phosphate. It catalyses the reaction D-mannitol 1-phosphate + H2O = D-mannitol + phosphate. The enzyme catalyses D-sorbitol 6-phosphate + H2O = D-sorbitol + phosphate. In terms of biological role, sugar-phosphate phosphohydrolase that catalyzes the dephosphorylation of D-mannitol 1-phosphate and D-sorbitol 6-phosphate. Also catalyzes the dephosphorylation of 2-deoxyglucose 6-phosphate (2dGlu6P); this is a biologically important activity in vivo since it contributes to the elimination of this toxic compound and plays an important role in the resistance of E.coli to 2-deoxyglucose. To a lesser extent, is also able to dephosphorylate mannose 6-phosphate (Man6P), erythrose-4-phosphate, 2-deoxyribose-5-phosphate (2dRib5P), ribose-5-phosphate (Rib5P) and glucose-6-phosphate (Glu6P) in vitro. This Escherichia coli (strain K12) protein is Hexitol phosphatase B.